The following is a 446-amino-acid chain: Putative hydrolase YbfO (446 aa).

A signal peptide spans 1 to 28 (MKRMIVRMTLPLLIVCLAFSSFSASARA).

The sequence is that of Putative hydrolase YbfO (ybfO) from Bacillus subtilis (strain 168).